The sequence spans 121 residues: Piercer of microtubule wall 2 protein (121 aa).

A compositionally biased stretch (basic and acidic residues) spans 1 to 10; the sequence is MTDRNRDKKS. The interval 1-29 is disordered; sequence MTDRNRDKKSTSPSNSDTEMKSEQLPPCV.

Belongs to the PIERCE2 family. In terms of assembly, microtubule inner protein component of sperm flagellar doublet microtubules. Interacts with CFAP53, ODAD1 and ODAD3; the interactions link the outer dynein arms docking complex (ODA-DC) to the internal microtubule inner proteins (MIP) in cilium axoneme. In terms of tissue distribution, expressed in airway epithelial cells.

The protein resides in the cytoplasm. Its subcellular location is the cytoskeleton. It is found in the cilium axoneme. It localises to the flagellum axoneme. Functionally, microtubule inner protein involved in the attachment of outer dynein arms (ODAs) to dynein-decorated doublet microtubules (DMTs) in cilia axoneme, which is required for motile cilia beating. This chain is Piercer of microtubule wall 2 protein, found in Homo sapiens (Human).